Here is a 93-residue protein sequence, read N- to C-terminus: Hematopoietic cell signal transducer (93 aa).

An N-terminal signal peptide occupies residues 1-18 (MIHLGHILFLLLLPVAAA). The Extracellular portion of the chain corresponds to 19–48 (QTTPGERSSLPAFYPGTSGSCSGCGSLSLP). The helical transmembrane segment at 49–69 (LLAGLVAADAVASLLIVGAVF) threads the bilayer. The Cytoplasmic segment spans residues 70 to 93 (LCARPRRSPAQEDGKVYINMPGRG). Tyrosine 86 carries the post-translational modification Phosphotyrosine. The tract at residues 86-88 (YIN) is GRB2 binding site. Residues 86 to 89 (YINM) are PIK3R1 binding site.

The protein belongs to the DAP10 family. As to quaternary structure, interacts with CLEC5A. Forms an CLEC5A/TYROBP/HCST trimolecular complex depending almost solely on TYROBP. Homodimer; Disulfide-linked. Heterohexamer composed of four subunits of HCST/DAP10 and two subunits of KLRK1. Interacts (via transmembrane domain) with KLRK1 (via transmembrane domain); the interaction is required for KLRK1 NK cell surface and induces NK cell-mediated cytotoxicity. Interacts with PIK3R1 and GRB2. Interacts with CD300H. In terms of processing, phosphorylated; PIK3R1 and GRB2 associate specifically with tyrosine-phosphorylated HCST. O-glycosylated. As to expression, predominantly expressed in hemopoietic cells such as NK cells, subset of T-cells and monocytes. Detected in leukocytes, spleen, and thymus.

Its subcellular location is the membrane. Functionally, transmembrane adapter protein which associates with KLRK1 to form an activation receptor KLRK1-HCST in lymphoid and myeloid cells; this receptor plays a major role in triggering cytotoxicity against target cells expressing cell surface ligands such as MHC class I chain-related MICA and MICB, and UL16-binding proteins (ULBPs); these ligands are up-regulated by stress conditions and pathological state such as viral infection and tumor transformation. Functions as a docking site for PI3-kinase PIK3R1 and GRB2. Interaction of ULBPs with KLRK1-HCST triggers calcium mobilization and activation of the PIK3R1, MAP2K/ERK, and JAK2/STAT5 signaling pathways. Both PIK3R1 and GRB2 are required for full KLRK1-HCST-mediated activation and ultimate killing of target cells. In NK cells, KLRK1-HCST signaling directly induces cytotoxicity and enhances cytokine production initiated via DAP12/TYROBP-associated receptors. In T-cells, it provides primarily costimulation for TCR-induced signals. KLRK1-HCST receptor plays a role in immune surveillance against tumors and is required for cytolysis of tumors cells; indeed, melanoma cells that do not express KLRK1 ligands escape from immune surveillance mediated by NK cells. The polypeptide is Hematopoietic cell signal transducer (HCST) (Homo sapiens (Human)).